A 215-amino-acid chain; its full sequence is Large ribosomal subunit protein uL4 (215 aa).

Residues 46 to 72 (TAKSKNRAEVSGGGRKPWAQKGGGRAR) are disordered. The segment covering 56-71 (SGGGRKPWAQKGGGRA) has biased composition (gly residues).

Belongs to the universal ribosomal protein uL4 family. Part of the 50S ribosomal subunit.

One of the primary rRNA binding proteins, this protein initially binds near the 5'-end of the 23S rRNA. It is important during the early stages of 50S assembly. It makes multiple contacts with different domains of the 23S rRNA in the assembled 50S subunit and ribosome. Its function is as follows. Forms part of the polypeptide exit tunnel. The chain is Large ribosomal subunit protein uL4 from Helicobacter pylori (strain G27).